A 334-amino-acid polypeptide reads, in one-letter code: NAD-dependent protein deacylase sirtuin-6 (334 aa).

Ser2 carries the post-translational modification N-acetylserine. Ser10 is modified (phosphoserine). Residues 27–272 (PEELERKVWE…CRLMKHLGLE (246 aa)) form the Deacetylase sirtuin-type domain. Lys33 carries the N6-acetyllysine modification. NAD(+) contacts are provided by Ala53, Thr57, Phe64, Arg65, Trp71, Gln113, and His133. Residue His133 is the Proton acceptor of the active site. Cys141, Cys144, and Cys166 together coordinate Zn(2+). Lys170 is covalently cross-linked (Glycyl lysine isopeptide (Lys-Gly) (interchain with G-Cter in ubiquitin)). Residue Cys177 coordinates Zn(2+). Residues Gly214, Ser216, Asn240, Gln242, and Val258 each contribute to the NAD(+) site. The disordered stretch occupies residues 312–334 (KSKPNSPILHRPPKRVKTEAAPS).

It belongs to the sirtuin family. Class IV subfamily. Homodimer; binds to nucleosomes and DNA ends as a homodimer. Interacts with RELA; interferes with RELA binding to target DNA. Interacts with SMARCA5; promoting recruitment of SMARCA5/SNF2H to double-strand breaks (DSBs) sites. Interacts with the mTORC2 complex; preventing the ability of SIRT6 to deacetylate FOXO1. Interacts with the CLOCK-BMAL1 complex; recruited by the CLOCK-BMAL1 complex to regulate expression of clock-controlled genes. Interacts with CSNK2A2; preventing CSNK2A2 localization to the nucleus. Requires Zn(2+) as cofactor. In terms of processing, acetylated at Lys-33. Deacetylation at Lys-33 by SIRT1 promotes homomultimerization and binding to double-strand breaks (DSBs) sites. Post-translationally, phosphorylation at Ser-10 by MAPK8/JNK1 in response to oxidative stress stimulates the mono-ADP-ribosyltransferase activity on PARP1, leading to PARP1 recruitment to double-strand breaks (DSBs). Monoubiquitinated at Lys-170 by STUB1/CHIP, preventing its degradation by the proteasome. In terms of processing, sumoylated, leading to specifically decrease ability to deacetylate histone H3 at 'Lys-56' (H3K56ac). Highest levels are found in muscle, thymus, spleen, brain and heart (at protein level).

The protein localises to the nucleus. It localises to the chromosome. The protein resides in the telomere. Its subcellular location is the endoplasmic reticulum. The catalysed reaction is N(6)-acetyl-L-lysyl-[protein] + NAD(+) + H2O = 2''-O-acetyl-ADP-D-ribose + nicotinamide + L-lysyl-[protein]. It carries out the reaction N(6)-tetradecanoyl-L-lysyl-[protein] + NAD(+) + H2O = 2''-O-tetradecanoyl-ADP-D-ribose + nicotinamide + L-lysyl-[protein]. It catalyses the reaction N(6)-hexadecanoyl-L-lysyl-[protein] + NAD(+) + H2O = 2''-O-hexadecanoyl-ADP-D-ribose + nicotinamide + L-lysyl-[protein]. The enzyme catalyses L-lysyl-[protein] + NAD(+) = N(6)-(ADP-D-ribosyl)-L-lysyl-[protein] + nicotinamide + H(+). The catalysed reaction is L-arginyl-[protein] + NAD(+) = N(omega)-(ADP-D-ribosyl)-L-arginyl-[protein] + nicotinamide + H(+). Its activity is regulated as follows. Compared to the defatty-acylase activity, the protein deacetylase activity is weak in vitro, and requires activation. The histone deacetylase activity is strongly activated upon binding to nucleosomes and chromatin in vivo. Two molecules of SIRT6 associate with the acidic patch of one nucleosome, while the C-terminal disordered region of SIRT6 associates with nucleosomal DNA, leading to efficient histone deacetylation. The protein-lysine deacetylase activity is also activated by long-chain free fatty-acids. Functionally, NAD-dependent protein deacetylase, deacylase and mono-ADP-ribosyltransferase that plays an essential role in DNA damage repair, telomere maintenance, metabolic homeostasis, inflammation, tumorigenesis and aging. Displays protein-lysine deacetylase or defatty-acylase (demyristoylase and depalmitoylase) activity, depending on the context. Acts as a key histone deacetylase by catalyzing deacetylation of histone H3 at 'Lys-9', 'Lys-18' and 'Lys-56' (H3K9ac, H3K18ac and H3K56ac, respectively), suppressing target gene expression of several transcription factors, including NF-kappa-B. Acts as an inhibitor of transcription elongation by mediating deacetylation of H3K9ac and H3K56ac, preventing release of NELFE from chromatin and causing transcriptional pausing. Involved in DNA repair by promoting double-strand break (DSB) repair: acts as a DSB sensor by recognizing and binding DSB sites, leading to (1) recruitment of DNA repair proteins, such as SMARCA5/SNF2H, and (2) deacetylation of histone H3K9ac and H3K56ac. SIRT6 participation to DSB repair is probably involved in extension of life span. Also promotes DNA repair by deacetylating non-histone proteins, such as DDB2 and p53/TP53. Specifically deacetylates H3K18ac at pericentric heterochromatin, thereby maintaining pericentric heterochromatin silencing at centromeres and protecting against genomic instability and cellular senescence. Involved in telomere maintenance by catalyzing deacetylation of histone H3 in telomeric chromatin, regulating telomere position effect and telomere movement in response to DNA damage. Required for embryonic stem cell differentiation by mediating histone deacetylation of H3K9ac. Plays a major role in metabolism by regulating processes such as glycolysis, gluconeogenesis, insulin secretion and lipid metabolism. Inhibits glycolysis via histone deacetylase activity and by acting as a corepressor of the transcription factor HIF1A, thereby controlling the expression of multiple glycolytic genes. Has tumor suppressor activity by repressing glycolysis, thereby inhibiting the Warburg effect. Also regulates glycolysis and tumorigenesis by mediating deacetylation and nuclear export of non-histone proteins, such as isoform M2 of PKM (PKM2). Acts as a negative regulator of gluconeogenesis by mediating deacetylation of non-histone proteins, such as FOXO1 and KAT2A/GCN5. Promotes beta-oxidation of fatty acids during fasting by catalyzing deacetylation of NCOA2, inducing coactivation of PPARA. Acts as a regulator of lipid catabolism in brown adipocytes, both by catalyzing deacetylation of histones and non-histone proteins, such as FOXO1. Also acts as a regulator of circadian rhythms, both by regulating expression of clock-controlled genes involved in lipid and carbohydrate metabolism, and by catalyzing deacetylation of PER2. The defatty-acylase activity is specifically involved in regulation of protein secretion. Has high activity toward long-chain fatty acyl groups and mediates protein-lysine demyristoylation and depalmitoylation of target proteins, such as RRAS2 and TNF, thereby regulating their secretion. Also acts as a mono-ADP-ribosyltransferase by mediating mono-ADP-ribosylation of PARP1, TRIM28/KAP1 or SMARCC2/BAF170. Mono-ADP-ribosyltransferase activity is involved in DNA repair, cellular senescence, repression of LINE-1 retrotransposon elements and regulation of transcription. This Mus musculus (Mouse) protein is NAD-dependent protein deacylase sirtuin-6.